The chain runs to 101 residues: Osteocalcin (101 aa).

Positions 1–18 (MKLAIVLLLLGLAVLCLG) are cleaved as a signal peptide. Residues 19-52 (GKDSQHSASAGDSRSSEAFISRQDSANFARRHKR) constitute a propeptide that is removed on maturation. Positions 53–99 (SYRYNVARGAAVTSPLESQREVCELNPDCDELADHIGFQEAYRRFYG) constitute a Gla domain. Ca(2+)-binding residues include E69, E73, E76, and D82. A 4-carboxyglutamate mark is found at E69, E73, and E76. A disulfide bridge connects residues C75 and C81.

This sequence belongs to the osteocalcin/matrix Gla protein family. In terms of processing, gamma-carboxyglutamate residues are formed by vitamin K dependent carboxylation by GGCX. These residues are essential for the binding of calcium.

The protein resides in the secreted. In terms of biological role, the carboxylated form is one of the main organic components of the bone matrix, which constitutes 1-2% of the total bone protein. The carboxylated form binds strongly to apatite and calcium. This is Osteocalcin (bglap) from Xenopus tropicalis (Western clawed frog).